A 419-amino-acid polypeptide reads, in one-letter code: Keratin, type I cytoskeletal 47 kDa (419 aa).

Residues methionine 1–asparagine 81 are head. A coil 1A region spans residues aspartate 82–tryptophan 117. The IF rod domain occupies aspartate 82–leucine 397. Positions tyrosine 118–isoleucine 139 are linker 1. Positions isoleucine 140–alanine 231 are coil 1B. The segment at lysine 232–isoleucine 254 is linker 12. Residues leucine 255 to glutamate 393 form a coil 2 region. The tail stretch occupies residues phenylalanine 394–aspartate 419.

It belongs to the intermediate filament family. As to quaternary structure, heterotetramer of two type I and two type II keratins.

This chain is Keratin, type I cytoskeletal 47 kDa (xk81b2), found in Xenopus laevis (African clawed frog).